We begin with the raw amino-acid sequence, 831 residues long: V-type proton ATPase 116 kDa subunit a1 (831 aa).

Over 1–388 the chain is Cytoplasmic; the sequence is MGELFRSEEM…DAYGIGSYRE (388 aa). Residues 389 to 407 traverse the membrane as a helical segment; the sequence is INPAPYTIITFPFLFAVMF. Residues 408–409 are Vacuolar-facing; sequence GD. A helical transmembrane segment spans residues 410 to 426; it reads FGHGILMTLFAVWMVVR. Over 427–441 the chain is Cytoplasmic; the sequence is ESRILSQKIDNELFS. A helical membrane pass occupies residues 442–471; sequence MMFSGRYIILLMGLFSTYTGLIYNDCFSKA. Topologically, residues 472–534 are vacuolar; the sequence is LNLFGSSWSV…ATNKLTFLNS (63 aa). The helical transmembrane segment at 535 to 554 threads the bilayer; sequence FKMKMSVILGIIHMIFGVAL. The Cytoplasmic portion of the chain corresponds to 555–572; the sequence is SVLNHIYFKKPLNIYLSF. Residues 573–593 traverse the membrane as a helical segment; it reads IPEMIFMTTLFGYLVILIIYK. The Vacuolar portion of the chain corresponds to 594 to 638; the sequence is WCAYDVSTSMVAPSLLIHFINMFLFSYQDTSLPMLYKGQMGLQCF. A helical membrane pass occupies residues 639–658; it reads LVVCAIICVPWMLVLKPLIL. Over 659-718 the chain is Cytoplasmic; sequence RRQYLRRKHLGTHNFGGIRVGNGPTEEDAEIIQHDQLSMHSDEEEEFDFGDTVVHQAIHT. A helical membrane pass occupies residues 719–743; it reads IEYCLGCISNTASYLRLWALSLAHA. The Vacuolar segment spans residues 744–764; sequence QLSEVLWTMVMHIGLNIRSLG. Residues 765-803 traverse the membrane as a helical segment; sequence GGIALVFIFSAFATLTIAILLIMEGLSAFLHALRLHWVE. At 804–831 the chain is on the cytoplasmic side; the sequence is FRNKFYMGTGFKFLPFSFETIWEGKFDD.

This sequence belongs to the V-ATPase 116 kDa subunit family. As to quaternary structure, V-ATPase is a heteromultimeric enzyme made up of two complexes: the ATP-hydrolytic V1 complex and the proton translocation V0 complex. The V1 complex consists of three catalytic AB heterodimers that form a heterohexamer, three peripheral stalks each consisting of EG heterodimers, one central rotor including subunits D and F, and the regulatory subunits C and H. The proton translocation complex V0 consists of the proton transport subunit a, a ring of proteolipid subunits c9c'', rotary subunit d, subunits e and f, and two accessory subunits.

It is found in the cytoplasmic vesicle. Its subcellular location is the clathrin-coated vesicle membrane. The protein resides in the secretory vesicle. The protein localises to the synaptic vesicle membrane. It localises to the melanosome. In terms of biological role, subunit of the V0 complex of vacuolar(H+)-ATPase (V-ATPase), a multisubunit enzyme composed of a peripheral complex (V1) that hydrolyzes ATP and a membrane integral complex (V0) that translocates protons. V-ATPase is responsible for acidifying and maintaining the pH of intracellular compartments and in some cell types, is targeted to the plasma membrane, where it is responsible for acidifying the extracellular environment. Required for assembly and activity of the vacuolar ATPase. This chain is V-type proton ATPase 116 kDa subunit a1 (atp6v0a1), found in Xenopus laevis (African clawed frog).